The sequence spans 258 residues: Aspartate/glutamate leucyltransferase (258 aa).

It belongs to the R-transferase family. Bpt subfamily.

It localises to the cytoplasm. It catalyses the reaction N-terminal L-glutamyl-[protein] + L-leucyl-tRNA(Leu) = N-terminal L-leucyl-L-glutamyl-[protein] + tRNA(Leu) + H(+). It carries out the reaction N-terminal L-aspartyl-[protein] + L-leucyl-tRNA(Leu) = N-terminal L-leucyl-L-aspartyl-[protein] + tRNA(Leu) + H(+). Its function is as follows. Functions in the N-end rule pathway of protein degradation where it conjugates Leu from its aminoacyl-tRNA to the N-termini of proteins containing an N-terminal aspartate or glutamate. The chain is Aspartate/glutamate leucyltransferase from Rhizobium johnstonii (strain DSM 114642 / LMG 32736 / 3841) (Rhizobium leguminosarum bv. viciae).